The primary structure comprises 372 residues: Lysophosphatidic acid receptor 5 (372 aa).

The Extracellular portion of the chain corresponds to 1–26; sequence MLANSSSTNSSVLPCPDYRPTHRLHL. N-linked (GlcNAc...) asparagine glycans are attached at residues asparagine 4 and asparagine 9. A helical membrane pass occupies residues 27 to 47; sequence VVYSLVLAAGLPLNALALWVF. Topologically, residues 48 to 55 are cytoplasmic; the sequence is LRALRVHS. Residues 56–76 form a helical membrane-spanning segment; the sequence is VVSVYMCNLAASDLLFTLSLP. The Extracellular portion of the chain corresponds to 77-96; the sequence is VRLSYYALHHWPFPDLLCQT. A disulfide bridge connects residues cysteine 94 and cysteine 175. The chain crosses the membrane as a helical span at residues 97–117; it reads TGAIFQMNMYGSCIFLMLINV. Residues 118–136 lie on the Cytoplasmic side of the membrane; that stretch reads DRYAAIVHPLRLRHLRRPR. The helical transmembrane segment at 137–157 threads the bilayer; the sequence is VARLLCLGVWALILVFAVPAA. The Extracellular portion of the chain corresponds to 158-187; sequence RVHRPSRCRYRDLEVRLCFESFSDELWKGR. Residues 188-208 traverse the membrane as a helical segment; the sequence is LLPLVLLAEALGFLLPLAAVV. At 209 to 239 the chain is on the cytoplasmic side; that stretch reads YSSGRVFWTLARPDATQSQRRRKTVRLLLAN. A helical membrane pass occupies residues 240–260; that stretch reads LVIFLLCFVPYNSTLAVYGLL. Over 261–276 the chain is Extracellular; sequence RSKLVAASVPARDRVR. A helical transmembrane segment spans residues 277-297; it reads GVLMVMVLLAGANCVLDPLVY. At 298 to 372 the chain is on the cytoplasmic side; it reads YFSAEGFRNT…FTQCPQDSAL (75 aa). Residues 312-372 are disordered; that stretch reads GTPHRARTSA…FTQCPQDSAL (61 aa). Composition is skewed to polar residues over residues 332 to 341 and 357 to 372; these read SERSAVTTDA and SHSL…DSAL.

The protein belongs to the G-protein coupled receptor 1 family. In terms of tissue distribution, not expressed in frontal cortex, basal forebrain, caudate putamen, thalamus, or hippocampus.

It localises to the cell membrane. Functionally, receptor for lysophosphatidic acid (LPA), a mediator of diverse cellular activities. This Homo sapiens (Human) protein is Lysophosphatidic acid receptor 5 (LPAR5).